The chain runs to 111 residues: Denmotoxin (111 aa).

The N-terminal stretch at 1–19 is a signal peptide; the sequence is MKTLLLAVAVVAFVCLGSA. Residues 20 to 34 constitute a propeptide that is removed on maturation; that stretch reads DQLGLGRQQIDWGQG. Position 35 is a pyrrolidone carboxylic acid (glutamine 35). 5 disulfide bridges follow: cysteine 44/cysteine 68, cysteine 47/cysteine 55, cysteine 61/cysteine 87, cysteine 91/cysteine 102, and cysteine 103/cysteine 108.

Monomer. In terms of tissue distribution, expressed by the venom gland.

It is found in the secreted. Its function is as follows. This bird-specific postsynaptic neurotoxin irreversibly binds and inhibits the chick muscle alpha-1-beta-1-gamma-delta (CHRNA1-CHRNB1-CHRNG-CHNRD) nicotinic acetylcholine receptor (nAChR) 100-fold more compared with the mouse receptor. The weak binding to mouse receptor is reversible. This is Denmotoxin from Boiga dendrophila (Mangrove snake).